The primary structure comprises 293 residues: uncharacterized protein (293 aa).

It to M.jannaschii MJ1614 and MJ0008.

This is an uncharacterized protein from Methanocaldococcus jannaschii (strain ATCC 43067 / DSM 2661 / JAL-1 / JCM 10045 / NBRC 100440) (Methanococcus jannaschii).